The primary structure comprises 400 residues: Acetate kinase (400 aa).

Asn10 is a Mg(2+) binding site. Lys17 provides a ligand contact to ATP. Arg91 is a binding site for substrate. The active-site Proton donor/acceptor is the Asp150. Residues 210-214 (HLGNG), 285-287 (DCR), and 333-337 (GIGEN) each bind ATP. Glu387 is a binding site for Mg(2+).

The protein belongs to the acetokinase family. Homodimer. It depends on Mg(2+) as a cofactor. The cofactor is Mn(2+).

The protein localises to the cytoplasm. The catalysed reaction is acetate + ATP = acetyl phosphate + ADP. It functions in the pathway metabolic intermediate biosynthesis; acetyl-CoA biosynthesis; acetyl-CoA from acetate: step 1/2. Catalyzes the formation of acetyl phosphate from acetate and ATP. Can also catalyze the reverse reaction. The chain is Acetate kinase from Serratia proteamaculans (strain 568).